A 318-amino-acid polypeptide reads, in one-letter code: Energy-coupling factor transporter ATP-binding protein EcfA2 (318 aa).

Residues 22-271 form the ABC transporter domain; sequence LRAQGLKCVF…PEIMQTTSIA (250 aa). 59–66 provides a ligand contact to ATP; that stretch reads GNSGSGKS.

It belongs to the ABC transporter superfamily. Energy-coupling factor EcfA family. Forms a stable energy-coupling factor (ECF) transporter complex composed of 2 membrane-embedded substrate-binding proteins (S component), 2 ATP-binding proteins (A component) and 2 transmembrane proteins (T component).

It is found in the cell membrane. In terms of biological role, ATP-binding (A) component of a common energy-coupling factor (ECF) ABC-transporter complex. Unlike classic ABC transporters this ECF transporter provides the energy necessary to transport a number of different substrates. This is Energy-coupling factor transporter ATP-binding protein EcfA2 from Mycoplasmoides gallisepticum (strain R(low / passage 15 / clone 2)) (Mycoplasma gallisepticum).